The following is a 373-amino-acid chain: Chaperone protein DnaJ (373 aa).

The J domain maps to 4–68 (NYYQILGVSK…QKRAAYDRLG (65 aa)). Residues 136-214 (GIEKNINFSS…CHGMGRYHKQ (79 aa)) form a CR-type zinc finger. Residues C149, C152, C166, C169, C188, C191, C202, and C205 each contribute to the Zn(2+) site. CXXCXGXG motif repeat units follow at residues 149–156 (CDTCHGSG), 166–173 (CDACSGVG), 188–195 (CHKCQGNG), and 202–209 (CKKCHGMG).

This sequence belongs to the DnaJ family. As to quaternary structure, homodimer. Zn(2+) serves as cofactor.

The protein localises to the cytoplasm. Participates actively in the response to hyperosmotic and heat shock by preventing the aggregation of stress-denatured proteins and by disaggregating proteins, also in an autonomous, DnaK-independent fashion. Unfolded proteins bind initially to DnaJ; upon interaction with the DnaJ-bound protein, DnaK hydrolyzes its bound ATP, resulting in the formation of a stable complex. GrpE releases ADP from DnaK; ATP binding to DnaK triggers the release of the substrate protein, thus completing the reaction cycle. Several rounds of ATP-dependent interactions between DnaJ, DnaK and GrpE are required for fully efficient folding. Also involved, together with DnaK and GrpE, in the DNA replication of plasmids through activation of initiation proteins. The chain is Chaperone protein DnaJ from Rickettsia rickettsii (strain Iowa).